A 242-amino-acid polypeptide reads, in one-letter code: Ras-like protein family member 11A (242 aa).

A small GTPase-like region spans residues 17–241 (ESSSDYLLPK…SPKVKAPSAL (225 aa)). Residues 34–41 (GAGRVGKS), 81–85 (DTPGG), and 147–150 (NKGD) contribute to the GTP site.

It belongs to the small GTPase superfamily. Ras family. Interacts with UBF/UBTF. As to expression, widely expressed. Down-regulated in prostate tumors compared to normal prostate tissue. High levels found in colon tumor and normal colon tissue followed by small intestine, liver, jejunum, ileum, bladder and aorta. Lowest levels observed in endothelial cells.

The protein resides in the nucleus. The protein localises to the nucleolus. The catalysed reaction is GTP + H2O = GDP + phosphate + H(+). Functionally, regulator of rDNA transcription. Acts in cooperation UBF/UBTF and positively regulates RNA polymerase I transcription. The sequence is that of Ras-like protein family member 11A from Homo sapiens (Human).